The primary structure comprises 530 residues: UDP-glucuronosyltransferase 1A8 (530 aa).

The signal sequence occupies residues 1-25 (MARTGWTSPIPLCVSLLLTCGFAEA). N-linked (GlcNAc...) asparagine glycosylation is found at N71, N292, and N344. The chain crosses the membrane as a helical span at residues 488-504 (VIGFLLAVVLTVAFITF).

This sequence belongs to the UDP-glycosyltransferase family. As to quaternary structure, homodimer. Homooligomer. Interacts with UGT1A1, UGT1A3, UGT1A4, UGT1A6, UGT1A7, UGT1A9 and UGT1A10 to form heterodimers. Isoform 1 interacts with isoform 2/i2 suggesting that oligomerization is involved in negative regulation of transferase activity by isoform 2. Isoform 1 also interacts with respective i2 isoforms of UGT1A1, UGT1A3, UGT1A4, UGT1A6, UGT1A7, UGT1A9 and UGT1A10. Expressed in kidney, colon and small intestine. Not expressed in liver. In terms of tissue distribution, expressed in liver, kidney, colon and small intestine.

The protein localises to the endoplasmic reticulum membrane. It carries out the reaction glucuronate acceptor + UDP-alpha-D-glucuronate = acceptor beta-D-glucuronoside + UDP + H(+). It catalyses the reaction 17beta-estradiol + UDP-alpha-D-glucuronate = 17beta-estradiol 3-O-(beta-D-glucuronate) + UDP + H(+). The catalysed reaction is 17alpha-estradiol + UDP-alpha-D-glucuronate = 17alpha-estradiol 3-O-(beta-D-glucuronate) + UDP + H(+). The enzyme catalyses estrone + UDP-alpha-D-glucuronate = estrone 3-O-(beta-D-glucuronate) + UDP + H(+). It carries out the reaction 16alpha,17alpha-estriol + UDP-alpha-D-glucuronate = 16alpha,17alpha-estriol 3-O-(beta-D-glucuronate) + UDP + H(+). It catalyses the reaction 2-hydroxy-17beta-estradiol + UDP-alpha-D-glucuronate = 2-hydroxy-17beta-estradiol 3-O-(beta-D-glucuronate) + UDP + H(+). The catalysed reaction is 2-hydroxy-17beta-estradiol + UDP-alpha-D-glucuronate = 17beta-estradiol 2-O-(beta-D-glucuronate) + UDP + H(+). The enzyme catalyses 2-hydroxyestrone + UDP-alpha-D-glucuronate = 2-hydroxyestrone 3-O-(beta-D-glucuronate) + UDP + H(+). It carries out the reaction 4-hydroxy-17beta-estradiol + UDP-alpha-D-glucuronate = 4-hydroxy-17beta-estradiol 3-O-(beta-D-glucuronate) + UDP + H(+). It catalyses the reaction 4-hydroxy-17beta-estradiol + UDP-alpha-D-glucuronate = 17beta-estradiol 4-O-(beta-D-glucuronate) + UDP + H(+). The catalysed reaction is 4-hydroxyestrone + UDP-alpha-D-glucuronate = 4-hydroxyestrone 3-O-(beta-D-glucuronate) + UDP + H(+). The enzyme catalyses 4-hydroxyestrone + UDP-alpha-D-glucuronate = estrone 4-O-(beta-D-glucuronate) + UDP + H(+). It carries out the reaction 2-methoxy-17beta-estradiol + UDP-alpha-D-glucuronate = 2-methoxy-17beta-estradiol 3-O-(beta-D-glucuronate) + UDP + H(+). It catalyses the reaction 2-methoxyestrone + UDP-alpha-D-glucuronate = 2-methoxyestrone 3-O-(beta-D-glucuronate) + UDP + H(+). The catalysed reaction is 4-methoxy-17beta-estradiol + UDP-alpha-D-glucuronate = 4-methoxy-17beta-estradiol 3-O-(beta-D-glucuronate) + UDP + H(+). The enzyme catalyses 4-methoxyestrone + UDP-alpha-D-glucuronate = 4-methoxyestrone 3-O-(beta-D-glucuronate) + UDP + H(+). It carries out the reaction 17beta-hydroxy-5alpha-androstan-3-one + UDP-alpha-D-glucuronate = 5alpha-dihydrotestosterone 17-O-(beta-D-glucuronate) + UDP + H(+). It catalyses the reaction 5alpha-dihydrotestosterone 17-O-(beta-D-glucuronate) + UDP-alpha-D-glucuronate = 5alpha-dihydrotestosterone 17-O-[beta-D-glucuronosyl-(1-&gt;2)-glucuronate] + UDP + H(+). The catalysed reaction is prunetin + UDP-alpha-D-glucuronate = prunetin-4'-O-beta-D-glucuronide + UDP. The enzyme catalyses prunetin + UDP-alpha-D-glucuronate = prunetin-5-O-beta-D-glucuronide + UDP. It carries out the reaction candesartan + UDP-alpha-D-glucuronate = candesartan O-beta-D-glucuronoside + UDP. It catalyses the reaction mycophenolate + UDP-alpha-D-glucuronate = mycophenolate 7-O-beta-D-glucuronide + UDP + H(+). The catalysed reaction is (E)-ferulate + UDP-alpha-D-glucuronate = (E)-4-O-(beta-D-glucuronosyl)-ferulate + UDP + H(+). The enzyme catalyses (E)-ferulate + UDP-alpha-D-glucuronate = (E)-ferulic acid beta-D-glucuronate ester + UDP. UDP-glucuronosyltransferase (UGT) that catalyzes phase II biotransformation reactions in which lipophilic substrates are conjugated with glucuronic acid to increase the metabolite's water solubility, thereby facilitating excretion into either the urine or bile. Essential for the elimination and detoxification of drugs, xenobiotics and endogenous compounds. Catalyzes the glucuronidation of endogenous steroid hormones such as androgens and estrogens. Produces dihydrotestosterone (DHT) diglucuronide from the DHT after two subsequent glucoronidation steps. Involved in the glucuronidation of the phytochemical ferulic acid at the phenolic or the carboxylic acid group. Also catalyzes the glucuronidation of the isoflavones genistein, daidzein, glycitein, formononetin, biochanin A and prunetin, which are phytoestrogens with anticancer and cardiovascular properties. Involved in the glucuronidation of the AGTR1 angiotensin receptor antagonist caderastan, a drug which can inhibit the effect of angiotensin II. Also metabolizes mycophenolate, an immunosuppressive agent. Its function is as follows. Lacks UGT glucuronidation activity but acts as a negative regulator of isoform 1. This Homo sapiens (Human) protein is UDP-glucuronosyltransferase 1A8.